The chain runs to 92 residues: Precursor of CEP12 (92 aa).

The N-terminal stretch at 1 to 30 (MVNRDNSIVALSFFMLFLLVLHLHFETTTA) is a signal peptide. The propeptide occupies 31 to 70 (ARKPVRVFGPPSSIEWSPPSPPKDDFEWFEINIYKNIEQT). The tract at residues 70-92 (TAFRPTGQGPSQGIGHKDPPGAP) is disordered. Residues P74 and P79 each carry the hydroxyproline modification. The propeptide occupies 86–92 (KDPPGAP).

The protein belongs to the C-terminally encoded plant signaling peptide (CEP) family. In terms of assembly, interacts with CEP receptors (e.g. CEPR1 and CEPR2). Post-translationally, the mature small signaling peptide is generated by proteolytic processing of the longer precursor.

The protein localises to the secreted. Its subcellular location is the extracellular space. It localises to the apoplast. Extracellular signaling peptide that may regulate primary root growth rate and systemic nitrogen (N)-demand signaling. The sequence is that of Precursor of CEP12 from Arabidopsis thaliana (Mouse-ear cress).